A 425-amino-acid chain; its full sequence is CinA-like protein (425 aa).

This sequence belongs to the CinA family.

This is CinA-like protein from Mycobacterium marinum (strain ATCC BAA-535 / M).